An 88-amino-acid chain; its full sequence is Small ribosomal subunit protein uS15c (88 aa).

Belongs to the universal ribosomal protein uS15 family. As to quaternary structure, part of the 30S ribosomal subunit.

It localises to the plastid. Its subcellular location is the chloroplast. This chain is Small ribosomal subunit protein uS15c (rps15), found in Lepidium virginicum (Virginia pepperweed).